Consider the following 67-residue polypeptide: Conotoxin LiC33 (67 aa).

Residues 1–22 (MRCVPVFIILLLLSPSAPSVDA) form the signal peptide. The propeptide occupies 23–48 (HPKTKDDVPLASFHDDAKRTLQRLWI). Residue Phe63 is modified to Phenylalanine amide. Residues 65 to 67 (KGK) constitute a propeptide that is removed on maturation.

Belongs to the conotoxin T superfamily. In terms of processing, contains 2 disulfide bonds that can be either 'C1-C3, C2-C4' or 'C1-C4, C2-C3', since these disulfide connectivities have been observed for conotoxins with cysteine framework V (for examples, see AC P0DQQ7 and AC P81755). Expressed by the venom duct.

Its subcellular location is the secreted. The sequence is that of Conotoxin LiC33 from Conus lividus (Livid cone).